Here is a 215-residue protein sequence, read N- to C-terminus: Ribose-5-phosphate isomerase A (215 aa).

Substrate contacts are provided by residues 26–29, 79–82, and 92–95; these read TGST, DGAD, and KGGG. The active-site Proton acceptor is glutamate 101. Lysine 119 provides a ligand contact to substrate.

Belongs to the ribose 5-phosphate isomerase family. As to quaternary structure, homodimer.

It carries out the reaction aldehydo-D-ribose 5-phosphate = D-ribulose 5-phosphate. Its pathway is carbohydrate degradation; pentose phosphate pathway; D-ribose 5-phosphate from D-ribulose 5-phosphate (non-oxidative stage): step 1/1. Its function is as follows. Catalyzes the reversible conversion of ribose-5-phosphate to ribulose 5-phosphate. The protein is Ribose-5-phosphate isomerase A of Stenotrophomonas maltophilia (strain K279a).